The primary structure comprises 198 residues: Superoxide dismutase [Fe] (198 aa).

Histidine 27, histidine 74, aspartate 158, and histidine 162 together coordinate Fe cation.

Belongs to the iron/manganese superoxide dismutase family. In terms of assembly, homodimer. Fe cation is required as a cofactor.

It localises to the cytoplasm. It catalyses the reaction 2 superoxide + 2 H(+) = H2O2 + O2. Destroys superoxide anion radicals which are normally produced within the cells and which are toxic to biological systems. This chain is Superoxide dismutase [Fe] (SODB), found in Plasmodium malariae.